The primary structure comprises 350 residues: tRNA uridine(34) hydroxylase (350 aa).

The region spanning 146-240 (DDPDAVFIDM…YARRAREQGL (95 aa)) is the Rhodanese domain. The Cysteine persulfide intermediate role is filled by Cys200. A compositionally biased stretch (basic and acidic residues) spans 319-328 (RRRRAGRENG). The segment at 319-350 (RRRRAGRENGNKIFNKSRGRLNSKLSIPDPAE) is disordered.

Belongs to the TrhO family.

The enzyme catalyses uridine(34) in tRNA + AH2 + O2 = 5-hydroxyuridine(34) in tRNA + A + H2O. In terms of biological role, catalyzes oxygen-dependent 5-hydroxyuridine (ho5U) modification at position 34 in tRNAs. This Salmonella typhi protein is tRNA uridine(34) hydroxylase.